A 557-amino-acid polypeptide reads, in one-letter code: 2-succinyl-5-enolpyruvyl-6-hydroxy-3-cyclohexene-1-carboxylate synthase (557 aa).

It belongs to the TPP enzyme family. MenD subfamily. In terms of assembly, homodimer. The cofactor is Mg(2+). Requires Mn(2+) as cofactor. It depends on thiamine diphosphate as a cofactor.

It carries out the reaction isochorismate + 2-oxoglutarate + H(+) = 5-enolpyruvoyl-6-hydroxy-2-succinyl-cyclohex-3-ene-1-carboxylate + CO2. It participates in quinol/quinone metabolism; 1,4-dihydroxy-2-naphthoate biosynthesis; 1,4-dihydroxy-2-naphthoate from chorismate: step 2/7. The protein operates within quinol/quinone metabolism; menaquinone biosynthesis. Catalyzes the thiamine diphosphate-dependent decarboxylation of 2-oxoglutarate and the subsequent addition of the resulting succinic semialdehyde-thiamine pyrophosphate anion to isochorismate to yield 2-succinyl-5-enolpyruvyl-6-hydroxy-3-cyclohexene-1-carboxylate (SEPHCHC). This chain is 2-succinyl-5-enolpyruvyl-6-hydroxy-3-cyclohexene-1-carboxylate synthase, found in Staphylococcus aureus (strain bovine RF122 / ET3-1).